Here is a 380-residue protein sequence, read N- to C-terminus: Homoserine O-acetyltransferase (380 aa).

The region spanning 59-363 is the AB hydrolase-1 domain; sequence NVVMVLHALT…IYGHDGFLVE (305 aa). Ser164 serves as the catalytic Nucleophile. Arg234 contacts substrate. Active-site residues include Asp327 and His357. Residue Asp358 participates in substrate binding.

Belongs to the AB hydrolase superfamily. MetX family. As to quaternary structure, homodimer.

The protein resides in the cytoplasm. The catalysed reaction is L-homoserine + acetyl-CoA = O-acetyl-L-homoserine + CoA. Its pathway is amino-acid biosynthesis; L-methionine biosynthesis via de novo pathway; O-acetyl-L-homoserine from L-homoserine: step 1/1. Functionally, transfers an acetyl group from acetyl-CoA to L-homoserine, forming acetyl-L-homoserine. This Mycolicibacterium smegmatis (strain ATCC 700084 / mc(2)155) (Mycobacterium smegmatis) protein is Homoserine O-acetyltransferase.